The following is a 967-amino-acid chain: MARPSLSRSNPLGFTPWPVTVITAVVYLALVVPLLVVHHVVPSAPSSSPKGLNLTEAWTDLQVLTNGFHPYNSHRNDEVHEWLLKRILELINSAPPASEYESVDEAKPDIVVFDDTQSNLTFSGRASGLGVYFESTNIMVYIRGWEEDKERWWEDPHGRPAGKGGVLVNAHYDSVSTGYGATDDGVGVVSCLQLIKYFTTPGHVPRRGLVLLFNNGEEDFLNGARVYSQHPISQLPHTFLNLEGAGAGGRATLFRSSDAEVTKPYMRAPHPFGSVLSANGFEAGLISSQTDYVVFEGDLGLRGLDVAFMEPRARYHTDEDDARHTSLDSVWHMLSAAVATTEGLVSDASGRFEGLPREDGRIASGSGPRGVWFDLFGSAFVVFELHTLFALSVTLLVVAPLVLLVTSIALNRADKMYLFRASASPEDSDGSEAVLLHGVRGFFRFPFLLVIPTAVTVGLAYLVTKFNPYIIHSSEYAVWSMMISAWVFLAWFVSRVADFARPSAFHRVYTLTWLFLVEWVLLVISTVYENKYGLAGGYFVFFAFAGTFLATWISYLELFALPRKSEYATQLALPSRRASSHGSRLGTASGEDVEDGEDEDEDDDGTTAEATETTSLLRGQRTTFANYVRVTGDYLRDDGDEPRQPNLYGHEQAWSIHLPKWVWVLQFLLTAPLVLTFVGPLALLLTSALRQTGQDGSSSLFIYIAVAALTTLLFIPLLPFIHRYTHHIPLFLLCVFAGTLIYNLVAFPFSPANRLKLFFIQEVDLDTGVNHASLSGAYPFVHDVASSLPSTAGQNITCDLDLLRPKCSWHGIPPQVVQPAEASKMKDWLSYNITRSDAEPKAQLSISGRNTRACKLVFDRPVLSFTVADSAYDPRFPHVSPDGTKEIRLWSREWGHTWTVDVEWAADTEETDEKGLRLSGRVVCLWSDGNTAGVIPALDEVRRYVPVWVGVSKLSDGLVEGSRRFEI.

Over 1 to 16 (MARPSLSRSNPLGFTP) the chain is Cytoplasmic. A helical transmembrane segment spans residues 17–37 (WPVTVITAVVYLALVVPLLVV). The Vacuolar portion of the chain corresponds to 38–387 (HHVVPSAPSS…SAFVVFELHT (350 aa)). N-linked (GlcNAc...) asparagine glycosylation is found at N53 and N119. The Zn(2+) site is built by H171 and D183. E217 serves as the catalytic Proton acceptor. E218, E243, and H316 together coordinate Zn(2+). Residues 388–408 (LFALSVTLLVVAPLVLLVTSI) traverse the membrane as a helical segment. At 409–441 (ALNRADKMYLFRASASPEDSDGSEAVLLHGVRG) the chain is on the cytoplasmic side. The chain crosses the membrane as a helical span at residues 442–462 (FFRFPFLLVIPTAVTVGLAYL). At 463–472 (VTKFNPYIIH) the chain is on the vacuolar side. The helical transmembrane segment at 473 to 493 (SSEYAVWSMMISAWVFLAWFV) threads the bilayer. The Cytoplasmic segment spans residues 494 to 507 (SRVADFARPSAFHR). A helical transmembrane segment spans residues 508–528 (VYTLTWLFLVEWVLLVISTVY). The Vacuolar portion of the chain corresponds to 529–532 (ENKY). The helical transmembrane segment at 533–553 (GLAGGYFVFFAFAGTFLATWI) threads the bilayer. Residues 554 to 663 (SYLELFALPR…WSIHLPKWVW (110 aa)) lie on the Cytoplasmic side of the membrane. The tract at residues 579-612 (SSHGSRLGTASGEDVEDGEDEDEDDDGTTAEATE) is disordered. The segment covering 591 to 606 (EDVEDGEDEDEDDDGT) has biased composition (acidic residues). Residues 664–684 (VLQFLLTAPLVLTFVGPLALL) form a helical membrane-spanning segment. The Vacuolar portion of the chain corresponds to 685 to 700 (LTSALRQTGQDGSSSL). A helical membrane pass occupies residues 701–721 (FIYIAVAALTTLLFIPLLPFI). Over 722–727 (HRYTHH) the chain is Cytoplasmic. Residues 728–748 (IPLFLLCVFAGTLIYNLVAFP) form a helical membrane-spanning segment. Topologically, residues 749 to 967 (FSPANRLKLF…LVEGSRRFEI (219 aa)) are vacuolar. 2 N-linked (GlcNAc...) asparagine glycosylation sites follow: N795 and N832.

Belongs to the peptidase M28 family. Requires Zn(2+) as cofactor.

The protein resides in the vacuole membrane. Its function is as follows. May be involved in vacuolar sorting and osmoregulation. In Neosartorya fischeri (strain ATCC 1020 / DSM 3700 / CBS 544.65 / FGSC A1164 / JCM 1740 / NRRL 181 / WB 181) (Aspergillus fischerianus), this protein is Vacuolar membrane protease.